We begin with the raw amino-acid sequence, 122 residues long: Phospholipase A2 nigroviriditoxin basic subunit B (122 aa).

Disulfide bonds link Cys-26–Cys-115, Cys-28–Cys-44, Cys-43–Cys-95, Cys-49–Cys-122, Cys-50–Cys-88, Cys-57–Cys-81, and Cys-75–Cys-86. Residues Tyr-27, Gly-29, and Gly-31 each contribute to the Ca(2+) site. His-47 is an active-site residue. Asp-48 is a binding site for Ca(2+). Asp-89 is an active-site residue.

Belongs to the phospholipase A2 family. Group II subfamily. D49 sub-subfamily. In terms of assembly, nigroviriditoxin is a heterodimer of an acidic subunit A and a basic subunit B. Ca(2+) is required as a cofactor. As to expression, expressed by the venom gland.

It is found in the secreted. It carries out the reaction a 1,2-diacyl-sn-glycero-3-phosphocholine + H2O = a 1-acyl-sn-glycero-3-phosphocholine + a fatty acid + H(+). Functionally, heterodimer A-B: Nigroviriditoxin possesses phospholipase A2 (PLA2) activity. It consists of a non-covalent association of a basic PLA2 subunit B with a non-enzymatic subunit A. Subunit B: Snake venom phospholipase A2 (PLA2) that induces myonecrosis in mice. PLA2 catalyzes the calcium-dependent hydrolysis of the 2-acyl groups in 3-sn-phosphoglycerides. This Bothriechis nigroviridis (Black-speckled palm pit viper) protein is Phospholipase A2 nigroviriditoxin basic subunit B.